We begin with the raw amino-acid sequence, 269 residues long: 4-hydroxy-tetrahydrodipicolinate reductase (269 aa).

NAD(+) is bound by residues Gly-8 to Met-13 and Glu-34. An NADP(+)-binding site is contributed by Arg-35. NAD(+)-binding positions include Gly-98–Thr-100 and Ala-122–Tyr-125. The Proton donor/acceptor role is filled by His-155. His-156 serves as a coordination point for (S)-2,3,4,5-tetrahydrodipicolinate. Lys-159 serves as the catalytic Proton donor. Gly-165 to Thr-166 lines the (S)-2,3,4,5-tetrahydrodipicolinate pocket.

Belongs to the DapB family.

The protein resides in the cytoplasm. It carries out the reaction (S)-2,3,4,5-tetrahydrodipicolinate + NAD(+) + H2O = (2S,4S)-4-hydroxy-2,3,4,5-tetrahydrodipicolinate + NADH + H(+). The catalysed reaction is (S)-2,3,4,5-tetrahydrodipicolinate + NADP(+) + H2O = (2S,4S)-4-hydroxy-2,3,4,5-tetrahydrodipicolinate + NADPH + H(+). Its pathway is amino-acid biosynthesis; L-lysine biosynthesis via DAP pathway; (S)-tetrahydrodipicolinate from L-aspartate: step 4/4. In terms of biological role, catalyzes the conversion of 4-hydroxy-tetrahydrodipicolinate (HTPA) to tetrahydrodipicolinate. The sequence is that of 4-hydroxy-tetrahydrodipicolinate reductase from Vibrio campbellii (strain ATCC BAA-1116).